A 56-amino-acid polypeptide reads, in one-letter code: Cytochrome b-c1 complex subunit 10 (56 aa).

The Mitochondrial matrix segment spans residues 1–12 (MLTRFLGPRYRQ). Residues 13 to 35 (LARNWVPTASLWGAVGAVGLVWA) traverse the membrane as a helical segment. At 36-56 (TDWRLILDWVPYINGKFKKDD) the chain is on the mitochondrial intermembrane side.

The protein belongs to the UQCR11/QCR10 family. As to quaternary structure, component of the ubiquinol-cytochrome c oxidoreductase (cytochrome b-c1 complex, complex III, CIII), a multisubunit enzyme composed of 11 subunits. The complex is composed of 3 respiratory subunits cytochrome b, cytochrome c1 and Rieske protein UQCRFS1, 2 core protein subunits UQCRC1/QCR1 and UQCRC2/QCR2, and 6 low-molecular weight protein subunits UQCRH/QCR6, UQCRB/QCR7, UQCRQ/QCR8, UQCR10/QCR9, UQCR11/QCR10 and subunit 9, the cleavage product of Rieske protein UQCRFS1. The complex exists as an obligatory dimer and forms supercomplexes (SCs) in the inner mitochondrial membrane with NADH-ubiquinone oxidoreductase (complex I, CI) and cytochrome c oxidase (complex IV, CIV), resulting in different assemblies (supercomplex SCI(1)III(2)IV(1) and megacomplex MCI(2)III(2)IV(2)).

Its subcellular location is the mitochondrion inner membrane. Its function is as follows. Component of the ubiquinol-cytochrome c oxidoreductase, a multisubunit transmembrane complex that is part of the mitochondrial electron transport chain which drives oxidative phosphorylation. The respiratory chain contains 3 multisubunit complexes succinate dehydrogenase (complex II, CII), ubiquinol-cytochrome c oxidoreductase (cytochrome b-c1 complex, complex III, CIII) and cytochrome c oxidase (complex IV, CIV), that cooperate to transfer electrons derived from NADH and succinate to molecular oxygen, creating an electrochemical gradient over the inner membrane that drives transmembrane transport and the ATP synthase. The cytochrome b-c1 complex catalyzes electron transfer from ubiquinol to cytochrome c, linking this redox reaction to translocation of protons across the mitochondrial inner membrane, with protons being carried across the membrane as hydrogens on the quinol. In the process called Q cycle, 2 protons are consumed from the matrix, 4 protons are released into the intermembrane space and 2 electrons are passed to cytochrome c. QCR10 has a role in CIII assembly and RIP1 stability. The chain is Cytochrome b-c1 complex subunit 10 (UQCR11) from Bos taurus (Bovine).